The following is a 232-amino-acid chain: MAGRATATATAAGKDRSSFAVTCSLLSQFLKEKKGGGGGLQGLGLGLRPAPAAPPAAGAGGAFRPPPTTMNLLSGLDAPAVEVEPNTAETAADELPLIKAPADQQSDESASEAAGEKAQQLTIFYGGKVVVFENFPSTKVKDLLQIVSTGDGVDKNTGTAATQSLPRPAHNSLPDLPIARRNSLHRFLEKRKGRMNANAPYQANCTAAPSKQANGDKSWLGFGQEMTIKQEI.

The disordered stretch occupies residues 54-73 (PPAAGAGGAFRPPPTTMNLL). One can recognise a Tify domain in the interval 114–149 (AGEKAQQLTIFYGGKVVVFENFPSTKVKDLLQIVST). The tract at residues 152 to 177 (GVDKNTGTAATQSLPRPAHNSLPDLP) is disordered. Residues 156-165 (NTGTAATQSL) are compositionally biased toward polar residues. A Jas motif is present at residues 177-202 (PIARRNSLHRFLEKRKGRMNANAPYQ). Positions 179 to 186 (ARRNSLHR) match the Nuclear localization signal motif.

The protein belongs to the TIFY/JAZ family. Interacts with BHLH148. Interacts with COI1B in a coronatine-dependent manner. Coronatine is an analog of jasmonoyl isoleucine (JA-Ile). Interacts with TIFY5/JAZ2, TIFY6B/JAZ4, TIFY9/JAZ5, TIFY11A, TIFY11D/JAZ12, TIFY11G/JAZ15 and NINJA1. Post-translationally, ubiquitinated. Increase in jasmonoyl isoleucine (JA-Ile) levels mediates its degradation via COI1B-mediated proteasome pathway.

Its subcellular location is the nucleus. The protein localises to the cytoplasm. It is found in the cytosol. Its function is as follows. Repressor of jasmonate (JA) responses. Acts as a repressor of JA-induced resistance to the bacterial blight pathogen Xanthomonas oryzae pv. oryzae (Xoo). Regulates JA-induced accumulation of linalool at the transcriptional level of linalool synthase gene LIS. Linalool is important for resistance to bacterial blight pathogen Xoo. In Oryza sativa subsp. japonica (Rice), this protein is Protein TIFY 10c.